The sequence spans 607 residues: WD repeat-containing protein 1 (607 aa).

WD repeat units lie at residues 4-45 (ELKK…IRNI), 48-87 (PAIADIYTEHAHPVVVARYAPSGFYIASGDTSGKLRIWDT), 93-135 (LLKY…LWDT), 138-176 (SVGEISGNIKVINSVDIKQTRPYRLVTGSDDNCCAFFEG), 180-218 (KFKFTMADHSRFVNCVRFSPDGSRLASAGADGQIFLYDG), 224-263 (VGNLGGSKAHDGGIYAVSWSADSTQLLSASGDKTAKIWDV), 270-306 (TTFHLGTEVLDQQLGCLWQKDYLLSVSLSGYINYLDK), 311-351 (RPLR…YWDA), 358-408 (TFTG…KMDV), 432-474 (LKDK…LYSI), 480-518 (KDEGKSLPVKGAVTDLAYSHDGAFLAVTDANKVVTVFNV), 523-561 (SEQNVYYGHHAKAVSVAWSPDNEHFASSGMDMMVYVWTL), and 566-604 (ARIKIPDAHRLHHVSSLAWLDEHTLATVSHDACVKQWTV).

This sequence belongs to the WD repeat AIP1 family.

Its subcellular location is the cell membrane. It localises to the cytoplasm. The protein localises to the cytoskeleton. It is found in the nucleus. In terms of biological role, induces disassembly of actin filaments in conjunction with ADF/cofilin family proteins. Doesn't sever actin filaments alone, but caps the barbed ends of filaments severed by cofilin, which blocks annealing and depolymerization and allows more extensive severing by cofilin. The sequence is that of WD repeat-containing protein 1 from Xenopus tropicalis (Western clawed frog).